Reading from the N-terminus, the 227-residue chain is Isopentenyl-diphosphate Delta-isomerase 1 (227 aa).

Lys36 provides a ligand contact to substrate. Residues His40 and His51 each coordinate Mg(2+). The 151-residue stretch at 49–199 folds into the Nudix hydrolase domain; sequence LLHRAFSVFL…EIKITPWFQI (151 aa). Substrate-binding residues include Arg70 and Lys74. Cys86 serves as the catalytic Proton acceptor. A substrate-binding site is contributed by Ser87. The Mg(2+) site is built by Glu146 and Glu148. Glu148 is a catalytic residue. Position 176 is an N6-acetyllysine (Lys176).

The protein belongs to the IPP isomerase type 1 family. Monomer. It depends on Mg(2+) as a cofactor.

The protein localises to the peroxisome. It carries out the reaction isopentenyl diphosphate = dimethylallyl diphosphate. The protein operates within isoprenoid biosynthesis; dimethylallyl diphosphate biosynthesis; dimethylallyl diphosphate from isopentenyl diphosphate: step 1/1. In terms of biological role, catalyzes the 1,3-allylic rearrangement of the homoallylic substrate isopentenyl (IPP) to its highly electrophilic allylic isomer, dimethylallyl diphosphate (DMAPP). The chain is Isopentenyl-diphosphate Delta-isomerase 1 (IDI1) from Bos taurus (Bovine).